The chain runs to 362 residues: Aminomethyltransferase (362 aa).

The protein belongs to the GcvT family. As to quaternary structure, the glycine cleavage system is composed of four proteins: P, T, L and H.

It catalyses the reaction N(6)-[(R)-S(8)-aminomethyldihydrolipoyl]-L-lysyl-[protein] + (6S)-5,6,7,8-tetrahydrofolate = N(6)-[(R)-dihydrolipoyl]-L-lysyl-[protein] + (6R)-5,10-methylene-5,6,7,8-tetrahydrofolate + NH4(+). The glycine cleavage system catalyzes the degradation of glycine. This chain is Aminomethyltransferase, found in Chlorobium limicola (strain DSM 245 / NBRC 103803 / 6330).